We begin with the raw amino-acid sequence, 695 residues long: Protein-glutamine gamma-glutamyltransferase 2 (695 aa).

Residues Cys272, His332, and Asp355 contribute to the active site. Ca(2+)-binding residues include Asn395, Asp397, Glu434, Glu444, and Glu449. GTP-binding positions include 476–482 (SIKHAQP) and 578–581 (ANIP).

This sequence belongs to the transglutaminase superfamily. Transglutaminase family. In terms of assembly, monomer. Ca(2+) is required as a cofactor.

It is found in the cytoplasm. It localises to the cytosol. The protein resides in the nucleus. The protein localises to the chromosome. Its subcellular location is the secreted. It is found in the extracellular space. It localises to the extracellular matrix. The protein resides in the cell membrane. The protein localises to the mitochondrion. The enzyme catalyses L-glutaminyl-[protein] + L-lysyl-[protein] = [protein]-L-lysyl-N(6)-5-L-glutamyl-[protein] + NH4(+). It carries out the reaction L-glutaminyl-[protein] + serotonin = 5-serotonyl-L-glutamyl-[protein] + NH4(+). The catalysed reaction is L-glutaminyl-[protein] + dopamine = 5-dopaminyl-L-glutamyl-[protein] + NH4(+). It catalyses the reaction L-glutaminyl-[protein] + histamine = 5-histaminyl-L-glutamyl-[protein] + NH4(+). The enzyme catalyses L-glutaminyl-[protein] + (R)-noradrenaline = 5-(R)-noradrenalinyl-L-glutamyl-[protein] + NH4(+). It carries out the reaction L-glutaminyl-[protein] + H2O = L-glutamyl-[protein] + NH4(+). With respect to regulation, acyltransferase activity is regulated by the binding of GTP and Ca(2+): inactivated by GTP, which stabilizes its closed structure, thereby obstructing the accessibility of substrates to the active sites. In contrast, Ca(2+) acts as a cofactor by inducing conformational change to the active open form. In absence of Ca(2+), Mg(2+) may bind Ca(2+)-binding sites, promoting GTP-binding and subsequent inhibition of the acyltransferase activity. Functionally, calcium-dependent acyltransferase that catalyzes the formation of covalent bonds between peptide-bound glutamine and various primary amines, such as gamma-amino group of peptide-bound lysine, or mono- and polyamines, thereby producing cross-linked or aminated proteins, respectively. Involved in many biological processes, such as bone development, angiogenesis, wound healing, cellular differentiation, chromatin modification and apoptosis. Acts as a protein-glutamine gamma-glutamyltransferase by mediating the cross-linking of proteins: under physiological conditions, the protein cross-linking activity is inhibited by GTP; inhibition is relieved by Ca(2+) in response to various stresses. When secreted, catalyzes cross-linking of proteins of the extracellular matrix, resulting in the formation of scaffolds. Plays a key role during apoptosis, both by (1) promoting the cross-linking of cytoskeletal proteins resulting in condensation of the cytoplasm, and by (2) mediating cross-linking proteins of the extracellular matrix, resulting in the irreversible formation of scaffolds that stabilize the integrity of the dying cells before their clearance by phagocytosis, thereby preventing the leakage of harmful intracellular components. In addition to protein cross-linking, can use different monoamine substrates to catalyze a vast array of protein post-translational modifications: mediates aminylation of serotonin, dopamine, noradrenaline or histamine into glutamine residues of target proteins to generate protein serotonylation, dopaminylation, noradrenalinylation or histaminylation, respectively. Mediates protein serotonylation of small GTPases during activation and aggregation of platelets, leading to constitutive activation of these GTPases. Plays a key role in chromatin organization by mediating serotonylation and dopaminylation of histone H3. Catalyzes serotonylation of 'Gln-5' of histone H3 (H3Q5ser) during serotonergic neuron differentiation, thereby facilitating transcription. Acts as a mediator of neurotransmission-independent role of nuclear dopamine in ventral tegmental area (VTA) neurons: catalyzes dopaminylation of 'Gln-5' of histone H3 (H3Q5dop), thereby regulating relapse-related transcriptional plasticity in the reward system. Also acts as a protein deamidase by mediating the side chain deamidation of specific glutamine residues of proteins to glutamate. May also act as an isopeptidase cleaving the previously formed cross-links. Also able to participate in signaling pathways independently of its acyltransferase activity: acts as a signal transducer in alpha-1 adrenergic receptor-mediated stimulation of phospholipase C-delta (PLCD) activity and is required for coupling alpha-1 adrenergic agonists to the stimulation of phosphoinositide lipid metabolism. The protein is Protein-glutamine gamma-glutamyltransferase 2 of Pagrus major (Red sea bream).